A 29-amino-acid chain; its full sequence is Toxin II.9 (29 aa).

In terms of domain architecture, LCN-type CS-alpha/beta spans 2 to 29; it reads KDGYLVNKYTGCKVNCYKLGENKFCNRE.

It belongs to the long (4 C-C) scorpion toxin superfamily. Sodium channel inhibitor family. Beta subfamily. As to expression, expressed by the venom gland.

Its subcellular location is the secreted. Its function is as follows. Binds to sodium channels (Nav) and shift the voltage of activation toward more negative potentials. This toxin is active on crustaceans. This chain is Toxin II.9, found in Centruroides limpidus (Mexican scorpion).